A 116-amino-acid chain; its full sequence is Ferredoxin-like protein in nif region (116 aa).

The 4Fe-4S ferredoxin-type domain occupies 2–29 (AYTITSQCISCKLCSSVCPTGAIKVAED). The iron-sulfur cluster site is built by Cys9, Cys12, Cys15, and Cys19.

The chain is Ferredoxin-like protein in nif region (fdxN) from Trichormus azollae (Anabaena azollae).